Reading from the N-terminus, the 94-residue chain is Co-chaperonin GroES (94 aa).

It belongs to the GroES chaperonin family. Heptamer of 7 subunits arranged in a ring. Interacts with the chaperonin GroEL.

The protein resides in the cytoplasm. In terms of biological role, together with the chaperonin GroEL, plays an essential role in assisting protein folding. The GroEL-GroES system forms a nano-cage that allows encapsulation of the non-native substrate proteins and provides a physical environment optimized to promote and accelerate protein folding. GroES binds to the apical surface of the GroEL ring, thereby capping the opening of the GroEL channel. The polypeptide is Co-chaperonin GroES (Streptococcus pneumoniae (strain ATCC BAA-255 / R6)).